We begin with the raw amino-acid sequence, 176 residues long: Cytidylate kinase (176 aa).

7–15 (GPPGSGTTS) lines the ATP pocket.

Belongs to the cytidylate kinase family. Type 2 subfamily.

Its subcellular location is the cytoplasm. The catalysed reaction is CMP + ATP = CDP + ADP. It catalyses the reaction dCMP + ATP = dCDP + ADP. The sequence is that of Cytidylate kinase from Methanosphaerula palustris (strain ATCC BAA-1556 / DSM 19958 / E1-9c).